Reading from the N-terminus, the 228-residue chain is Trichome differentiation protein GL1 (228 aa).

HTH myb-type domains are found at residues 11 to 63 (NQEY…MNYL) and 64 to 118 (SPNV…SKKL). 2 DNA-binding regions (H-T-H motif) span residues 39–63 (WNRIVRKTGLKRCGKSCRLRWMNYL) and 91–114 (WSLIAKRVPGRTDNQVKNYWNTHL).

Homodimer and heterodimer with MYB82. Interacts directly with GL3 and BHLH2. Part of a complex made of GL1, GL3 or BHLH2, and TTG1. Also interacts with BHLH2/EGL3/MYC146 and BHLH12/MYC1. Interacts with MYB82. In terms of tissue distribution, expressed in leaves, stems and flowers. Expressed in trichome cells and in leaf primordia.

Its subcellular location is the nucleus. Transcription activator, when associated with BHLH2/EGL3/MYC146 or BHLH12/MYC1. Involved in epidermal cell fate specification in leaves. Together with TTG1 and GL3, promotes trichome formation and endoreplication. Regulates the production of a signal that induces hair (trichome) precursor cells on leaf primordia to differentiate. Binds to the WER-binding sites (WBS) promoter regions and activates the transcription of target genes. The polypeptide is Trichome differentiation protein GL1 (Arabidopsis thaliana (Mouse-ear cress)).